Here is a 337-residue protein sequence, read N- to C-terminus: Viral cathepsin (337 aa).

A signal peptide spans 1 to 19; that stretch reads MTLLMIFTILLVASSQIEG. Residues 20 to 126 constitute a propeptide, activation peptide; it reads HLKFDIHDAQ…DAPPDVHDEL (107 aa). Disulfide bonds link Cys147–Cys188, Cys181–Cys221, and Cys276–Cys324. Residue Cys150 is part of the active site. Residue Asn172 is glycosylated (N-linked (GlcNAc...) asparagine; by host). Catalysis depends on residues His283 and Asn303.

Belongs to the peptidase C1 family. Synthesized as an inactive proenzyme and activated by proteolytic removal of the inhibitory propeptide.

It carries out the reaction Endopeptidase of broad specificity, hydrolyzing substrates of both cathepsin L and cathepsin B.. Its function is as follows. Cysteine protease that plays an essential role in host liquefaction to facilitate horizontal transmission of the virus. May participate in the degradation of foreign protein expressed by the baculovirus system. This chain is Viral cathepsin (VCATH), found in Adoxophyes honmai (Smaller tea tortrix moth).